A 442-amino-acid chain; its full sequence is tRNA modification GTPase MnmE (442 aa).

Arg-27, Glu-84, and Lys-124 together coordinate (6S)-5-formyl-5,6,7,8-tetrahydrofolate. In terms of domain architecture, TrmE-type G spans 221 to 366 (GLHVVIVGAP…LLDALQAFAE (146 aa)). GTP is bound by residues 231-236 (NAGKSS), 250-256 (SEEAGTT), and 275-278 (DTAG). Residues Ser-235 and Thr-256 each coordinate Mg(2+). Lys-442 contacts (6S)-5-formyl-5,6,7,8-tetrahydrofolate.

Belongs to the TRAFAC class TrmE-Era-EngA-EngB-Septin-like GTPase superfamily. TrmE GTPase family. In terms of assembly, homodimer. Heterotetramer of two MnmE and two MnmG subunits. K(+) is required as a cofactor.

Its subcellular location is the cytoplasm. In terms of biological role, exhibits a very high intrinsic GTPase hydrolysis rate. Involved in the addition of a carboxymethylaminomethyl (cmnm) group at the wobble position (U34) of certain tRNAs, forming tRNA-cmnm(5)s(2)U34. This is tRNA modification GTPase MnmE from Brucella abortus (strain 2308).